The primary structure comprises 584 residues: Sulfite reductase [NADPH] hemoprotein beta-component (584 aa).

Positions 447, 453, 492, and 496 each coordinate [4Fe-4S] cluster. C496 lines the siroheme pocket.

Belongs to the nitrite and sulfite reductase 4Fe-4S domain family. As to quaternary structure, alpha(8)-beta(8). The alpha component is a flavoprotein, the beta component is a hemoprotein. Siroheme serves as cofactor. The cofactor is [4Fe-4S] cluster.

The enzyme catalyses hydrogen sulfide + 3 NADP(+) + 3 H2O = sulfite + 3 NADPH + 4 H(+). The protein operates within sulfur metabolism; hydrogen sulfide biosynthesis; hydrogen sulfide from sulfite (NADPH route): step 1/1. Component of the sulfite reductase complex that catalyzes the 6-electron reduction of sulfite to sulfide. This is one of several activities required for the biosynthesis of L-cysteine from sulfate. The chain is Sulfite reductase [NADPH] hemoprotein beta-component from Colwellia psychrerythraea (strain 34H / ATCC BAA-681) (Vibrio psychroerythus).